Here is a 262-residue protein sequence, read N- to C-terminus: Phosphatidylglycerol--prolipoprotein diacylglyceryl transferase 1 (262 aa).

The next 4 helical transmembrane spans lie at 15-35, 40-60, 83-103, and 108-128; these read WYGI…SINA, LNFD…IIGA, QGGL…FIYC, and VDFL…QGIG. Position 129 (Arg129) interacts with a 1,2-diacyl-sn-glycero-3-phospho-(1'-sn-glycerol). The next 3 helical transmembrane spans lie at 169–189, 197–217, and 229–249; these read TFLY…IILY, GVVI…IEGL, and VAQL…IIIV.

It belongs to the Lgt family.

It is found in the cell membrane. The enzyme catalyses L-cysteinyl-[prolipoprotein] + a 1,2-diacyl-sn-glycero-3-phospho-(1'-sn-glycerol) = an S-1,2-diacyl-sn-glyceryl-L-cysteinyl-[prolipoprotein] + sn-glycerol 1-phosphate + H(+). It participates in protein modification; lipoprotein biosynthesis (diacylglyceryl transfer). Its function is as follows. Catalyzes the transfer of the diacylglyceryl group from phosphatidylglycerol to the sulfhydryl group of the N-terminal cysteine of a prolipoprotein, the first step in the formation of mature lipoproteins. This is Phosphatidylglycerol--prolipoprotein diacylglyceryl transferase 1 from Clostridium perfringens (strain 13 / Type A).